We begin with the raw amino-acid sequence, 249 residues long: FMN reductase (NADPH) (249 aa).

This sequence belongs to the flavin oxidoreductase frp family. As to quaternary structure, homodimer.

The catalysed reaction is FMNH2 + NADP(+) = FMN + NADPH + 2 H(+). Its function is as follows. Reduces FMNH(2) to FMN, with NADPH as reductant. It also reduces nitroaromatic compounds, quinones and azo dyes. This Bacillus subtilis (strain 168) protein is FMN reductase (NADPH) (nfrA1).